The chain runs to 417 residues: Serine hydroxymethyltransferase (417 aa).

(6S)-5,6,7,8-tetrahydrofolate is bound by residues L121 and 125–127 (GHL). K229 bears the N6-(pyridoxal phosphate)lysine mark. A (6S)-5,6,7,8-tetrahydrofolate-binding site is contributed by 355–357 (SPF).

It belongs to the SHMT family. In terms of assembly, homodimer. It depends on pyridoxal 5'-phosphate as a cofactor.

The protein resides in the cytoplasm. It carries out the reaction (6R)-5,10-methylene-5,6,7,8-tetrahydrofolate + glycine + H2O = (6S)-5,6,7,8-tetrahydrofolate + L-serine. It functions in the pathway one-carbon metabolism; tetrahydrofolate interconversion. It participates in amino-acid biosynthesis; glycine biosynthesis; glycine from L-serine: step 1/1. Catalyzes the reversible interconversion of serine and glycine with tetrahydrofolate (THF) serving as the one-carbon carrier. This reaction serves as the major source of one-carbon groups required for the biosynthesis of purines, thymidylate, methionine, and other important biomolecules. Also exhibits THF-independent aldolase activity toward beta-hydroxyamino acids, producing glycine and aldehydes, via a retro-aldol mechanism. The polypeptide is Serine hydroxymethyltransferase (Yersinia pestis bv. Antiqua (strain Antiqua)).